Here is a 365-residue protein sequence, read N- to C-terminus: Chorismate synthase (365 aa).

Residue arginine 48 participates in NADP(+) binding. Residues 125–127, glycine 286, 301–305, and arginine 328 each bind FMN; these read RGS and KPTPS.

The protein belongs to the chorismate synthase family. Requires FMNH2 as cofactor.

It carries out the reaction 5-O-(1-carboxyvinyl)-3-phosphoshikimate = chorismate + phosphate. The protein operates within metabolic intermediate biosynthesis; chorismate biosynthesis; chorismate from D-erythrose 4-phosphate and phosphoenolpyruvate: step 7/7. Its function is as follows. Catalyzes the anti-1,4-elimination of the C-3 phosphate and the C-6 proR hydrogen from 5-enolpyruvylshikimate-3-phosphate (EPSP) to yield chorismate, which is the branch point compound that serves as the starting substrate for the three terminal pathways of aromatic amino acid biosynthesis. This reaction introduces a second double bond into the aromatic ring system. This Methanosphaera stadtmanae (strain ATCC 43021 / DSM 3091 / JCM 11832 / MCB-3) protein is Chorismate synthase.